Reading from the N-terminus, the 1131-residue chain is Chitin synthase 1 (1131 aa).

Basic and acidic residues predominate over residues 1-20; it reads MSDQNNRSRNEYHSNRKNEP. Positions 1-22 are disordered; that stretch reads MSDQNNRSRNEYHSNRKNEPSY. A phosphoserine mark is found at Ser34, Ser35, Ser270, Ser299, and Ser318. The disordered stretch occupies residues 282 to 305; the sequence is YLHDDSRPVNDGKEELDSVKSGYS. The residue at position 328 (Thr328) is a Phosphothreonine. Ser358 bears the Phosphoserine mark. 7 helical membrane-spanning segments follow: residues 795–815, 833–853, 866–886, 914–934, 942–962, 1042–1062, and 1101–1121; these read FFYL…FFLV, VLSV…FILS, VLTC…SIFM, IVIS…IYLQ, FIQY…YAFC, LVII…LETG, and ILWL…IYMI.

The protein belongs to the chitin synthase family.

It is found in the cell membrane. The catalysed reaction is [(1-&gt;4)-N-acetyl-beta-D-glucosaminyl](n) + UDP-N-acetyl-alpha-D-glucosamine = [(1-&gt;4)-N-acetyl-beta-D-glucosaminyl](n+1) + UDP + H(+). With respect to regulation, requires proteolytic activation. Functionally, polymerizes chitin, a structural polymer of the cell wall and septum, by transferring the sugar moiety of UDP-GlcNAc to the non-reducing end of the growing chitin polymer. Required for mitotic division septum formation during adverse conditions. This Saccharomyces cerevisiae (strain ATCC 204508 / S288c) (Baker's yeast) protein is Chitin synthase 1 (CHS1).